The chain runs to 32 residues: Photosystem I reaction center subunit XII (32 aa).

Residues 10-27 (VVALISALVTGILALRLG) form a helical membrane-spanning segment.

The protein belongs to the PsaM family.

The protein localises to the plastid. The protein resides in the chloroplast thylakoid membrane. The chain is Photosystem I reaction center subunit XII from Zygnema circumcarinatum (Green alga).